A 403-amino-acid chain; its full sequence is Tyrosine--tRNA ligase (403 aa).

A 'HIGH' region motif is present at residues 46–55 (PTAPDLHLGH). The short motif at 230 to 234 (KMSKS) is the 'KMSKS' region element. Lys233 serves as a coordination point for ATP. Positions 342–402 (LFITQILNQA…GKKAYAKVTV (61 aa)) constitute an S4 RNA-binding domain.

The protein belongs to the class-I aminoacyl-tRNA synthetase family. TyrS type 2 subfamily. As to quaternary structure, homodimer.

It is found in the cytoplasm. The catalysed reaction is tRNA(Tyr) + L-tyrosine + ATP = L-tyrosyl-tRNA(Tyr) + AMP + diphosphate + H(+). Its function is as follows. Catalyzes the attachment of tyrosine to tRNA(Tyr) in a two-step reaction: tyrosine is first activated by ATP to form Tyr-AMP and then transferred to the acceptor end of tRNA(Tyr). This Psychrobacter arcticus (strain DSM 17307 / VKM B-2377 / 273-4) protein is Tyrosine--tRNA ligase.